We begin with the raw amino-acid sequence, 263 residues long: MGQVSLYVESLGEGPDLVLLHGWAMHSGMWGSTRRSLAQHFRLHLVDLPGHGFSRGALPYKRGEKNGVSEDMVERVVEVLPPDCVICGWSLGGQLAIELALREPARVEKIILTSTTPSFVKREDWQWGMEELTLKAFAENLRRDFSTTMKRFLTLQVSGGGDAGKVLPEMRRLLFERSAPEPEALEAGLQIVLANDLRGKLRNIVQPTLLIHGENDVIAHPEAAAWMKQQFQDVELAMLPNCSHVPFLSYPDKFIANIVRFAR.

Residues W23, 90 to 91, and 152 to 156 each bind substrate; these read SL and FLTLQ. Residue S90 is the Nucleophile of the active site. Active-site residues include D216 and H244. H244 contributes to the substrate binding site.

This sequence belongs to the AB hydrolase superfamily. Carboxylesterase BioH family. In terms of assembly, monomer.

The protein localises to the cytoplasm. The catalysed reaction is 6-carboxyhexanoyl-[ACP] methyl ester + H2O = 6-carboxyhexanoyl-[ACP] + methanol + H(+). Its pathway is cofactor biosynthesis; biotin biosynthesis. Functionally, the physiological role of BioH is to remove the methyl group introduced by BioC when the pimeloyl moiety is complete. It allows to synthesize pimeloyl-ACP via the fatty acid synthetic pathway through the hydrolysis of the ester bonds of pimeloyl-ACP esters. The polypeptide is Pimeloyl-[acyl-carrier protein] methyl ester esterase (Nitrosospira multiformis (strain ATCC 25196 / NCIMB 11849 / C 71)).